Reading from the N-terminus, the 326-residue chain is MLLSLAIDTAFKGYLSLQNTIENDFELNGIAPLESATPTQISYIDQDKYLSNLTDSQAGAVFIRPHLLDKVPSHIQPLVVENPHLAFALLSQLFAAPCFTLTTQNPRTNNIQIGANVVIGDNVSIGEHSIIMPNVVIGDNVSIGEHCKIYPNVVIYRDSIIGNRVNIHAGSIIGCDGFGYAHTAEGKHIKIEHNGRVVIEDDVEIGANNTIDRAVFGQTLIKQGAKIDNLVQIGHNCVVGEHTLLVSQVGLAGSTTTGRNVIMGGQAGTGGHIHIGDFVQVAGRGAVGKNLPPHTKWGGHPLMELNEWMKFYVSLRRLIKKDSKKL.

H235 functions as the Proton acceptor in the catalytic mechanism.

The protein belongs to the transferase hexapeptide repeat family. LpxD subfamily. As to quaternary structure, homotrimer.

The enzyme catalyses a UDP-3-O-[(3R)-3-hydroxyacyl]-alpha-D-glucosamine + a (3R)-hydroxyacyl-[ACP] = a UDP-2-N,3-O-bis[(3R)-3-hydroxyacyl]-alpha-D-glucosamine + holo-[ACP] + H(+). It participates in bacterial outer membrane biogenesis; LPS lipid A biosynthesis. Catalyzes the N-acylation of UDP-3-O-acylglucosamine using 3-hydroxyacyl-ACP as the acyl donor. Is involved in the biosynthesis of lipid A, a phosphorylated glycolipid that anchors the lipopolysaccharide to the outer membrane of the cell. This Helicobacter hepaticus (strain ATCC 51449 / 3B1) protein is UDP-3-O-acylglucosamine N-acyltransferase.